A 265-amino-acid chain; its full sequence is Hydroxyethylthiazole kinase (265 aa).

Residue Met50 participates in substrate binding. Positions 125 and 171 each coordinate ATP. Gly198 contacts substrate.

It belongs to the Thz kinase family. Requires Mg(2+) as cofactor.

The catalysed reaction is 5-(2-hydroxyethyl)-4-methylthiazole + ATP = 4-methyl-5-(2-phosphooxyethyl)-thiazole + ADP + H(+). It functions in the pathway cofactor biosynthesis; thiamine diphosphate biosynthesis; 4-methyl-5-(2-phosphoethyl)-thiazole from 5-(2-hydroxyethyl)-4-methylthiazole: step 1/1. Its function is as follows. Catalyzes the phosphorylation of the hydroxyl group of 4-methyl-5-beta-hydroxyethylthiazole (THZ). This chain is Hydroxyethylthiazole kinase, found in Salmonella paratyphi C (strain RKS4594).